A 30-amino-acid polypeptide reads, in one-letter code: Protein ScvA (30 aa).

A disordered region spans residues 1–30; sequence MERQNVQQQRGKDQRPQRPGASNPRRPNQR.

Its function is as follows. Might be involved in DNA-binding; the protein binds DNA in gel-shift assays and immunogold electron microscopy shows labelling of condensed chromatin. The protein is Protein ScvA (scvA) of Coxiella burnetii (strain RSA 493 / Nine Mile phase I).